Reading from the N-terminus, the 323-residue chain is Alpha-tubulin N-acetyltransferase 1 (323 aa).

Positions 1 to 190 constitute an N-acetyltransferase domain; the sequence is MEFPFDVDAL…NNFVIFEGFF (190 aa). Lys-56 is subject to N6-acetyllysine; by autocatalysis. Residue 124–137 participates in acetyl-CoA binding; sequence FYIHESVQRHGHGR. Position 146 is an N6-acetyllysine; by autocatalysis (Lys-146). Position 160–169 (160–169) interacts with acetyl-CoA; that stretch reads SQKLLKFLNK. Residues 196–239 are disordered; the sequence is PPAPSLRATRHSRAAAVDPTPTAPARKLPPKRAEGDIKPYSSSD. The segment covering 209–220 has biased composition (low complexity); that stretch reads AAAVDPTPTAPA. Residues 226 to 239 are compositionally biased toward basic and acidic residues; that stretch reads KRAEGDIKPYSSSD. N6-acetyllysine; by autocatalysis occurs at positions 233 and 244. The disordered stretch occupies residues 252–287; it reads PLNRAPRRATPPAHPPPRSSSLGNSPERGPLRPFVP. A phosphoserine mark is found at Ser-272 and Ser-276. Asymmetric dimethylarginine is present on Arg-305. Ser-315 bears the Phosphoserine mark. Arg-323 carries the post-translational modification Omega-N-methylarginine.

It belongs to the acetyltransferase ATAT1 family. In terms of assembly, component of the BBSome complex. Interacts with AP2 alpha-adaptins, including AP2A2, but not with AP1 gamma-adaptin (AP1G1/AP1G2); this interaction is required for efficient alpha-tubulin acetylation, hence clathrin-coated pits are sites of microtubule acetylation. Post-translationally, autoacetylation strongly increases tubulin acetylation.

It is found in the cytoplasm. The protein resides in the membrane. Its subcellular location is the clathrin-coated pit. It localises to the cell junction. The protein localises to the focal adhesion. It is found in the cell projection. The protein resides in the axon. Its subcellular location is the cytoskeleton. It localises to the spindle. The enzyme catalyses L-lysyl-[alpha-tubulin] + acetyl-CoA = N(6)-acetyl-L-lysyl-[alpha-tubulin] + CoA + H(+). In terms of biological role, specifically acetylates 'Lys-40' in alpha-tubulin on the lumenal side of microtubules. Promotes microtubule destabilization and accelerates microtubule dynamics; this activity may be independent of acetylation activity. Acetylates alpha-tubulin with a slow enzymatic rate, due to a catalytic site that is not optimized for acetyl transfer. Enters the microtubule through each end and diffuses quickly throughout the lumen of microtubules. Acetylates only long/old microtubules because of its slow acetylation rate since it does not have time to act on dynamically unstable microtubules before the enzyme is released. Required for normal sperm flagellar function. Promotes directional cell locomotion and chemotaxis, through AP2A2-dependent acetylation of alpha-tubulin at clathrin-coated pits that are concentrated at the leading edge of migrating cells. May facilitate primary cilium assembly. The polypeptide is Alpha-tubulin N-acetyltransferase 1 (Macaca mulatta (Rhesus macaque)).